We begin with the raw amino-acid sequence, 813 residues long: Kinesin-like protein KIN-8B (813 aa).

The Kinesin motor domain maps to 14 to 345 (TLTVAVKCRP…LKYADRAKEI (332 aa)). 104-111 (GSTGSGKT) provides a ligand contact to ATP. The stretch at 349–391 (IQKNIGTIDTHMSDYQRMIDNLQSEVSQLKTQLAEKESQLSIK) forms a coiled coil. 2 disordered regions span residues 664-694 (GSRP…PRMA) and 756-813 (AVST…RQHQ). 3 stretches are compositionally biased toward polar residues: residues 682–694 (YPQT…PRMA), 761–791 (GARN…NSHT), and 804–813 (KGNNTQRQHQ).

It belongs to the TRAFAC class myosin-kinesin ATPase superfamily. Kinesin family. KIN-8 subfamily.

This chain is Kinesin-like protein KIN-8B, found in Arabidopsis thaliana (Mouse-ear cress).